The following is a 1279-amino-acid chain: ATP-dependent helicase/nuclease subunit A (1279 aa).

The region spanning 4–499 (TKWTDEQRQA…VKLFKNFRSR (496 aa)) is the UvrD-like helicase ATP-binding domain. 25 to 32 (AGAGAGKT) lines the ATP pocket. Positions 526-853 (EEALKVGASY…RIMSIHKSKG (328 aa)) constitute a UvrD-like helicase C-terminal domain.

The protein belongs to the helicase family. AddA subfamily. As to quaternary structure, heterodimer of AddA and AddB/RexB. Mg(2+) serves as cofactor.

The catalysed reaction is Couples ATP hydrolysis with the unwinding of duplex DNA by translocating in the 3'-5' direction.. The enzyme catalyses ATP + H2O = ADP + phosphate + H(+). Functionally, the heterodimer acts as both an ATP-dependent DNA helicase and an ATP-dependent, dual-direction single-stranded exonuclease. Recognizes the chi site generating a DNA molecule suitable for the initiation of homologous recombination. The AddA nuclease domain is required for chi fragment generation; this subunit has the helicase and 3' -&gt; 5' nuclease activities. In Clostridium botulinum (strain 657 / Type Ba4), this protein is ATP-dependent helicase/nuclease subunit A.